A 302-amino-acid polypeptide reads, in one-letter code: N-acetylmuramic acid 6-phosphate etherase (302 aa).

Residues 58–221 (IGESFLNGGR…STGAMVKTGK (164 aa)) form the SIS domain. Catalysis depends on Glu86, which acts as the Proton donor. Glu117 is an active-site residue.

This sequence belongs to the GCKR-like family. MurNAc-6-P etherase subfamily. As to quaternary structure, homodimer.

The enzyme catalyses N-acetyl-D-muramate 6-phosphate + H2O = N-acetyl-D-glucosamine 6-phosphate + (R)-lactate. Its pathway is amino-sugar metabolism; N-acetylmuramate degradation. In terms of biological role, specifically catalyzes the cleavage of the D-lactyl ether substituent of MurNAc 6-phosphate, producing GlcNAc 6-phosphate and D-lactate. This Clostridium botulinum (strain Langeland / NCTC 10281 / Type F) protein is N-acetylmuramic acid 6-phosphate etherase.